Here is a 200-residue protein sequence, read N- to C-terminus: Lipopolysaccharide core heptose(II)-phosphate phosphatase (200 aa).

An N-terminal signal peptide occupies residues 1–25 (MLAFCRSSLKSKKYFIILLALAAIA).

Belongs to the phosphoglycerate mutase family. Ais subfamily.

The protein resides in the periplasm. It functions in the pathway bacterial outer membrane biogenesis; lipopolysaccharide metabolism. In terms of biological role, catalyzes the dephosphorylation of heptose(II) of the outer membrane lipopolysaccharide core. In Shigella flexneri serotype 5b (strain 8401), this protein is Lipopolysaccharide core heptose(II)-phosphate phosphatase.